The sequence spans 160 residues: Peptidyl-prolyl cis-trans isomerase CYP18-1 (160 aa).

The region spanning 3–153 is the PPIase cyclophilin-type domain; the sequence is VTLHTNLGDI…AEIRLNRVTI (151 aa).

This sequence belongs to the cyclophilin-type PPIase family. In terms of tissue distribution, ubiquitous.

The protein resides in the cytoplasm. The catalysed reaction is [protein]-peptidylproline (omega=180) = [protein]-peptidylproline (omega=0). PPIases accelerate the folding of proteins. It catalyzes the cis-trans isomerization of proline imidic peptide bonds in oligopeptides. The protein is Peptidyl-prolyl cis-trans isomerase CYP18-1 (CYP18-1) of Arabidopsis thaliana (Mouse-ear cress).